We begin with the raw amino-acid sequence, 291 residues long: Protein pxr1 (291 aa).

Residues 1-11 (MGLAAPRKRTK) are compositionally biased toward basic residues. Disordered regions lie at residues 1-26 (MGLA…RSTD) and 146-268 (LVPP…FRGR). 2 stretches are compositionally biased toward polar residues: residues 15–25 (DPNNTTWSRST) and 146–156 (LVPPTSQNGQA). The region spanning 25 to 79 (TDGFGHRILKAQGWTPGSFLGPRNAAHSDLFTTASASHIRVVLKDDNLGLGARPK) is the G-patch domain. A compositionally biased stretch (basic and acidic residues) spans 194–205 (ETNSRGSREKER). Residues 206–219 (KREKRQMRRDKKRK) are compositionally biased toward basic residues. Basic and acidic residues predominate over residues 230 to 247 (MQEKTRVQGPSEDVKPTE).

It belongs to the PINX1 family.

It localises to the nucleus. The protein localises to the nucleolus. Its function is as follows. Involved in rRNA-processing at A0, A1 and A2 sites and negatively regulates telomerase. The protein is Protein pxr1 (pxr1) of Aspergillus clavatus (strain ATCC 1007 / CBS 513.65 / DSM 816 / NCTC 3887 / NRRL 1 / QM 1276 / 107).